The sequence spans 339 residues: Olfactory receptor 7E24 (339 aa).

The Extracellular segment spans residues Met-1–Pro-43. A glycan (N-linked (GlcNAc...) asparagine) is linked at Asn-23. The chain crosses the membrane as a helical span at residues Val-44–Ile-64. Over Leu-65 to His-72 the chain is Cytoplasmic. A helical transmembrane segment spans residues Leu-73–Ser-93. Residues Thr-94–Thr-117 are Extracellular-facing. Cys-115 and Cys-207 are oxidised to a cystine. Residues Gln-118–Tyr-138 traverse the membrane as a helical segment. The Cytoplasmic portion of the chain corresponds to Asp-139–Arg-157. A helical transmembrane segment spans residues Leu-158 to Asn-178. At Leu-179–Met-215 the chain is on the extracellular side. A helical membrane pass occupies residues Val-216 to Ser-235. Over Tyr-236 to Ala-255 the chain is Cytoplasmic. A helical membrane pass occupies residues Phe-256 to Gly-276. The Extracellular segment spans residues Tyr-277–Ser-289. The chain crosses the membrane as a helical span at residues Met-290–Leu-310. Residues Arg-311–Gly-339 are Cytoplasmic-facing.

This sequence belongs to the G-protein coupled receptor 1 family.

It localises to the cell membrane. Its function is as follows. Odorant receptor. The protein is Olfactory receptor 7E24 (OR7E24) of Homo sapiens (Human).